Here is an 82-residue protein sequence, read N- to C-terminus: DNA-directed RNA polymerase subunit omega (82 aa).

Belongs to the RNA polymerase subunit omega family. The RNAP catalytic core consists of 2 alpha, 1 beta, 1 beta' and 1 omega subunit. When a sigma factor is associated with the core the holoenzyme is formed, which can initiate transcription.

It catalyses the reaction RNA(n) + a ribonucleoside 5'-triphosphate = RNA(n+1) + diphosphate. Promotes RNA polymerase assembly. Latches the N- and C-terminal regions of the beta' subunit thereby facilitating its interaction with the beta and alpha subunits. The polypeptide is DNA-directed RNA polymerase subunit omega (Lacticaseibacillus casei (strain BL23) (Lactobacillus casei)).